The primary structure comprises 545 residues: Ribulokinase (545 aa).

It belongs to the ribulokinase family.

It carries out the reaction D-ribulose + ATP = D-ribulose 5-phosphate + ADP + H(+). The enzyme catalyses L-ribulose + ATP = L-ribulose 5-phosphate + ADP + H(+). It participates in carbohydrate degradation; L-arabinose degradation via L-ribulose; D-xylulose 5-phosphate from L-arabinose (bacterial route): step 2/3. In Staphylococcus aureus (strain MRSA252), this protein is Ribulokinase.